A 342-amino-acid chain; its full sequence is Dihydroorotate dehydrogenase (quinone) (342 aa).

Residues 61-65 (AGLDK) and Thr-85 contribute to the FMN site. A substrate-binding site is contributed by Lys-65. 110 to 114 (NRMGF) serves as a coordination point for substrate. Asn-138 and Asn-171 together coordinate FMN. Asn-171 is a substrate binding site. Ser-174 (nucleophile) is an active-site residue. Residue Asn-176 participates in substrate binding. Residues Lys-216 and Thr-244 each coordinate FMN. 245-246 (NT) contributes to the substrate binding site. FMN is bound by residues Gly-267, Gly-296, and 317–318 (YS).

It belongs to the dihydroorotate dehydrogenase family. Type 2 subfamily. Monomer. Requires FMN as cofactor.

The protein resides in the cell membrane. The catalysed reaction is (S)-dihydroorotate + a quinone = orotate + a quinol. It participates in pyrimidine metabolism; UMP biosynthesis via de novo pathway; orotate from (S)-dihydroorotate (quinone route): step 1/1. Its function is as follows. Catalyzes the conversion of dihydroorotate to orotate with quinone as electron acceptor. The chain is Dihydroorotate dehydrogenase (quinone) from Pseudomonas aeruginosa (strain UCBPP-PA14).